Here is a 141-residue protein sequence, read N- to C-terminus: Hemoglobin subunit alpha-1/2 (141 aa).

Positions 1-141 (VLSPADKTNV…VSTVLTSKYR (141 aa)) constitute a Globin domain. Residue Ser-3 is modified to Phosphoserine. N6-succinyllysine is present on Lys-7. Thr-8 is subject to Phosphothreonine. Lys-11 carries the post-translational modification N6-succinyllysine. The residue at position 16 (Lys-16) is an N6-acetyllysine; alternate. Lys-16 is subject to N6-succinyllysine; alternate. Tyr-24 is subject to Phosphotyrosine. An N6-succinyllysine modification is found at Lys-40. Ser-49 carries the phosphoserine modification. His-58 contributes to the O2 binding site. Residue His-87 participates in heme b binding. Ser-102 carries the post-translational modification Phosphoserine. Thr-108 is subject to Phosphothreonine. Ser-124 carries the phosphoserine modification. A phosphothreonine mark is found at Thr-134 and Thr-137. Ser-138 carries the post-translational modification Phosphoserine.

It belongs to the globin family. In terms of assembly, heterotetramer of two alpha chains and two beta chains. As to expression, red blood cells.

Functionally, involved in oxygen transport from the lung to the various peripheral tissues. The chain is Hemoglobin subunit alpha-1/2 from Leptonychotes weddellii (Weddell seal).